Reading from the N-terminus, the 271-residue chain is Adenosylcobinamide-GDP ribazoletransferase (271 aa).

A run of 7 helical transmembrane segments spans residues 4–24 (FLLALRTTFGFLSTIPVGMSM), 35–55 (YLQTFAGIVLGSMIGIFAYLT), 58–78 (FLPSTISAVLIMVFIYYITGL), 108–128 (SLGIGGVSYTVLALIALYASI), 135–155 (VLFFSDNAALIIAISLLIAEI), 192–212 (FVLGALVCVLAFGTLGIIGYI), and 246–266 (IIVLMVLTVAITAVNNGYGGL).

This sequence belongs to the CobS family. Requires Mg(2+) as cofactor.

It is found in the cell membrane. It catalyses the reaction alpha-ribazole + adenosylcob(III)inamide-GDP = adenosylcob(III)alamin + GMP + H(+). It carries out the reaction alpha-ribazole 5'-phosphate + adenosylcob(III)inamide-GDP = adenosylcob(III)alamin 5'-phosphate + GMP + H(+). It functions in the pathway cofactor biosynthesis; adenosylcobalamin biosynthesis; adenosylcobalamin from cob(II)yrinate a,c-diamide: step 7/7. In terms of biological role, joins adenosylcobinamide-GDP and alpha-ribazole to generate adenosylcobalamin (Ado-cobalamin). Also synthesizes adenosylcobalamin 5'-phosphate from adenosylcobinamide-GDP and alpha-ribazole 5'-phosphate. In Methanococcoides burtonii (strain DSM 6242 / NBRC 107633 / OCM 468 / ACE-M), this protein is Adenosylcobinamide-GDP ribazoletransferase.